Reading from the N-terminus, the 128-residue chain is MSWAGPEEIYLSTSLASYLDRKLLVLLRDGRKLMGTLRSFDQFANAVLEGACERVIVGEQYCDIPLGLYVIRGENVVLIGELDTEREELPPHMIRVSEAEIKRAQKVEREASELRGTMRKRMEFLDFD.

The Sm domain maps to 10–85 (YLSTSLASYL…VVLIGELDTE (76 aa)).

The protein belongs to the snRNP Sm proteins family. As to quaternary structure, component of the heptameric LSM1-LSM7 complex that forms a seven-membered ring structure with a donut shape. The LSM subunits are arranged in the order LSM1, LSM2, LSM3, LSM6, LSM5, LSM7 and LSM4. LSM1B subunit interacts only with its two neighboring subunits, LSM2 and LSM4. Expressed in roots, leaves, stems, flowers and siliques.

It is found in the cytoplasm. The protein localises to the P-body. Functionally, component of the cytoplasmic LSM1-LSM7 complex which is involved in mRNA degradation by promoting decapping and leading to accurate 5'-3' mRNA decay. LSM1A and LSM1B are essential for the formation of the cytoplasmic LSM1-LSM7 complex which regulates developmental gene expression by the decapping of specific development-related transcripts. Required for P-body formation during heat stress. This chain is Sm-like protein LSM1B, found in Arabidopsis thaliana (Mouse-ear cress).